Consider the following 419-residue polypeptide: Serine hydroxymethyltransferase (419 aa).

(6S)-5,6,7,8-tetrahydrofolate is bound by residues L121 and G125–L127. N6-(pyridoxal phosphate)lysine is present on K230. (6S)-5,6,7,8-tetrahydrofolate is bound by residues E246 and S355–F357.

This sequence belongs to the SHMT family. In terms of assembly, homodimer. Pyridoxal 5'-phosphate serves as cofactor.

The protein resides in the cytoplasm. The catalysed reaction is (6R)-5,10-methylene-5,6,7,8-tetrahydrofolate + glycine + H2O = (6S)-5,6,7,8-tetrahydrofolate + L-serine. It functions in the pathway one-carbon metabolism; tetrahydrofolate interconversion. Its pathway is amino-acid biosynthesis; glycine biosynthesis; glycine from L-serine: step 1/1. Its function is as follows. Catalyzes the reversible interconversion of serine and glycine with tetrahydrofolate (THF) serving as the one-carbon carrier. This reaction serves as the major source of one-carbon groups required for the biosynthesis of purines, thymidylate, methionine, and other important biomolecules. Also exhibits THF-independent aldolase activity toward beta-hydroxyamino acids, producing glycine and aldehydes, via a retro-aldol mechanism. In Streptococcus suis (strain 98HAH33), this protein is Serine hydroxymethyltransferase.